A 508-amino-acid chain; its full sequence is Light-independent protochlorophyllide reductase subunit B (508 aa).

A [4Fe-4S] cluster-binding site is contributed by Asp-36. Asp-282 serves as the catalytic Proton donor. Position 417–418 (417–418 (GL)) interacts with substrate.

Belongs to the ChlB/BchB/BchZ family. In terms of assembly, protochlorophyllide reductase is composed of three subunits; BchL, BchN and BchB. Forms a heterotetramer of two BchB and two BchN subunits. The cofactor is [4Fe-4S] cluster.

It catalyses the reaction chlorophyllide a + oxidized 2[4Fe-4S]-[ferredoxin] + 2 ADP + 2 phosphate = protochlorophyllide a + reduced 2[4Fe-4S]-[ferredoxin] + 2 ATP + 2 H2O. It functions in the pathway porphyrin-containing compound metabolism; bacteriochlorophyll biosynthesis (light-independent). In terms of biological role, component of the dark-operative protochlorophyllide reductase (DPOR) that uses Mg-ATP and reduced ferredoxin to reduce ring D of protochlorophyllide (Pchlide) to form chlorophyllide a (Chlide). This reaction is light-independent. The NB-protein (BchN-BchB) is the catalytic component of the complex. In Methylocella silvestris (strain DSM 15510 / CIP 108128 / LMG 27833 / NCIMB 13906 / BL2), this protein is Light-independent protochlorophyllide reductase subunit B.